The sequence spans 370 residues: Phosphoribosylformylglycinamidine cyclo-ligase (370 aa).

The protein belongs to the AIR synthase family.

The protein localises to the cytoplasm. It catalyses the reaction 2-formamido-N(1)-(5-O-phospho-beta-D-ribosyl)acetamidine + ATP = 5-amino-1-(5-phospho-beta-D-ribosyl)imidazole + ADP + phosphate + H(+). It participates in purine metabolism; IMP biosynthesis via de novo pathway; 5-amino-1-(5-phospho-D-ribosyl)imidazole from N(2)-formyl-N(1)-(5-phospho-D-ribosyl)glycinamide: step 2/2. The sequence is that of Phosphoribosylformylglycinamidine cyclo-ligase from Rhodospirillum rubrum (strain ATCC 11170 / ATH 1.1.1 / DSM 467 / LMG 4362 / NCIMB 8255 / S1).